Reading from the N-terminus, the 308-residue chain is tRNA dimethylallyltransferase (308 aa).

17–24 (GPTGSGKS) provides a ligand contact to ATP. 19-24 (TGSGKS) lines the substrate pocket.

It belongs to the IPP transferase family. In terms of assembly, monomer. The cofactor is Mg(2+).

The catalysed reaction is adenosine(37) in tRNA + dimethylallyl diphosphate = N(6)-dimethylallyladenosine(37) in tRNA + diphosphate. In terms of biological role, catalyzes the transfer of a dimethylallyl group onto the adenine at position 37 in tRNAs that read codons beginning with uridine, leading to the formation of N6-(dimethylallyl)adenosine (i(6)A). In Paenarthrobacter aurescens (strain TC1), this protein is tRNA dimethylallyltransferase.